The chain runs to 501 residues: 2,3-bisphosphoglycerate-independent phosphoglycerate mutase (501 aa).

Mn(2+)-binding residues include Asp-10 and Ser-60. Residue Ser-60 is the Phosphoserine intermediate of the active site. Substrate contacts are provided by residues His-121, 151–152, Arg-182, Arg-188, 256–259, and Lys-329; these read RD and RPDR. Residues Asp-394, His-398, Asp-435, His-436, and His-453 each contribute to the Mn(2+) site.

It belongs to the BPG-independent phosphoglycerate mutase family. In terms of assembly, monomer. Requires Mn(2+) as cofactor.

The enzyme catalyses (2R)-2-phosphoglycerate = (2R)-3-phosphoglycerate. It functions in the pathway carbohydrate degradation; glycolysis; pyruvate from D-glyceraldehyde 3-phosphate: step 3/5. Catalyzes the interconversion of 2-phosphoglycerate and 3-phosphoglycerate. The chain is 2,3-bisphosphoglycerate-independent phosphoglycerate mutase from Mycoplasmopsis synoviae (strain 53) (Mycoplasma synoviae).